The primary structure comprises 293 residues: Phosphate import ATP-binding protein PstB (293 aa).

Residues 46-288 (FGIRGVDVFY…PDHELTEAYI (243 aa)) form the ABC transporter domain. 78–85 (GPSGCGKS) is a binding site for ATP.

It belongs to the ABC transporter superfamily. Phosphate importer (TC 3.A.1.7) family. The complex is composed of two ATP-binding proteins (PstB), two transmembrane proteins (PstC and PstA) and a solute-binding protein (PstS).

The protein localises to the cell inner membrane. The enzyme catalyses phosphate(out) + ATP + H2O = ADP + 2 phosphate(in) + H(+). Part of the ABC transporter complex PstSACB involved in phosphate import. Responsible for energy coupling to the transport system. This Saccharophagus degradans (strain 2-40 / ATCC 43961 / DSM 17024) protein is Phosphate import ATP-binding protein PstB.